A 202-amino-acid chain; its full sequence is uncharacterized protein (202 aa).

This is an uncharacterized protein from Galliformes (FAdV-1).